The sequence spans 208 residues: Probable GTP-binding protein EngB (208 aa).

The 175-residue stretch at 25–199 (TGIEVAFAGR…RQKLDSWYNG (175 aa)) folds into the EngB-type G domain. GTP contacts are provided by residues 33–40 (GRSNAGKS), 60–64 (GRTQL), 78–81 (DLPG), 145–148 (TKSD), and 178–180 (FSS). The Mg(2+) site is built by serine 40 and threonine 62.

Belongs to the TRAFAC class TrmE-Era-EngA-EngB-Septin-like GTPase superfamily. EngB GTPase family. Mg(2+) is required as a cofactor.

Functionally, necessary for normal cell division and for the maintenance of normal septation. The polypeptide is Probable GTP-binding protein EngB (Enterobacter sp. (strain 638)).